The primary structure comprises 353 residues: S-adenosylmethionine:tRNA ribosyltransferase-isomerase (353 aa).

It belongs to the QueA family. Monomer.

The protein localises to the cytoplasm. It catalyses the reaction 7-aminomethyl-7-carbaguanosine(34) in tRNA + S-adenosyl-L-methionine = epoxyqueuosine(34) in tRNA + adenine + L-methionine + 2 H(+). It functions in the pathway tRNA modification; tRNA-queuosine biosynthesis. In terms of biological role, transfers and isomerizes the ribose moiety from AdoMet to the 7-aminomethyl group of 7-deazaguanine (preQ1-tRNA) to give epoxyqueuosine (oQ-tRNA). This chain is S-adenosylmethionine:tRNA ribosyltransferase-isomerase, found in Nitrosomonas europaea (strain ATCC 19718 / CIP 103999 / KCTC 2705 / NBRC 14298).